The sequence spans 382 residues: Neuropeptide Y receptor type 1 (382 aa).

The Extracellular segment spans residues 1–33 (MNSTLFSRVENYSVHYNVSENSPFLAFENDDCH). N-linked (GlcNAc...) asparagine glycans are attached at residues N2, N11, and N17. A helical transmembrane segment spans residues 34 to 54 (LPLAVIFTLALAYGAVIILGV). Topologically, residues 55–75 (SGNLALIIIILKQKEMRNVTN) are cytoplasmic. Residues 76 to 96 (ILIVNLSFSDLLVAVMCLPFT) form a helical membrane-spanning segment. Residues 97–115 (FVYTLMDHWVFGETMCKLN) are Extracellular-facing. C112 and C197 are oxidised to a cystine. The chain crosses the membrane as a helical span at residues 116-136 (PFVQCVSITVSIFSLVLIAVE). At 137-153 (RHQLIINPRGWRPNNRH) the chain is on the cytoplasmic side. A helical transmembrane segment spans residues 154-174 (AYIGITVIWVLAVASSLPFVI). Residues 175-210 (YQILTDEPFQNVSLAAFKDKYVCFDKFPSDSHRLSY) are Extracellular-facing. Residues 211–231 (TTLLLVLQYFGPLCFIFICYF) traverse the membrane as a helical segment. The Cytoplasmic segment spans residues 232 to 259 (KIYIRLKRRNNMMDKIRDSKYRSSETKR). Residues 260–280 (INVMLLSIVVAFAVCWLPLTI) traverse the membrane as a helical segment. Residues 281 to 298 (FNTVFDWNHQIIATCNHN) lie on the Extracellular side of the membrane. Residues 299 to 319 (LLFLLCHLTAMISTCVNPIFY) form a helical membrane-spanning segment. At 320 to 382 (GFLNKNFQRD…KISMNDNEKI (63 aa)) the chain is on the cytoplasmic side. The S-palmitoyl cysteine moiety is linked to residue C337. Phosphoserine occurs at positions 367 and 375.

Belongs to the G-protein coupled receptor 1 family. Brain.

Its subcellular location is the cell membrane. Its function is as follows. Receptor for neuropeptide Y and peptide YY. In Rattus norvegicus (Rat), this protein is Neuropeptide Y receptor type 1 (Npy1r).